Here is a 366-residue protein sequence, read N- to C-terminus: Aminomethyltransferase (366 aa).

It belongs to the GcvT family. The glycine cleavage system is composed of four proteins: P, T, L and H.

The enzyme catalyses N(6)-[(R)-S(8)-aminomethyldihydrolipoyl]-L-lysyl-[protein] + (6S)-5,6,7,8-tetrahydrofolate = N(6)-[(R)-dihydrolipoyl]-L-lysyl-[protein] + (6R)-5,10-methylene-5,6,7,8-tetrahydrofolate + NH4(+). Functionally, the glycine cleavage system catalyzes the degradation of glycine. This is Aminomethyltransferase from Neisseria meningitidis serogroup A / serotype 4A (strain DSM 15465 / Z2491).